The chain runs to 181 residues: ADP-ribosylation factor 3 (181 aa).

G2 carries N-myristoyl glycine lipidation. Residues 24-31 (GLDAAGKT), 67-71 (DVGGQ), and 126-129 (NKQD) contribute to the GTP site.

Belongs to the small GTPase superfamily. Arf family. Interacts with PRKCABP. Interacts with PI4KB and NCS1/FREQ at the Golgi complex.

It localises to the golgi apparatus. Its subcellular location is the cytoplasm. The protein localises to the perinuclear region. GTP-binding protein that functions as an allosteric activator of the cholera toxin catalytic subunit, an ADP-ribosyltransferase. Involved in protein trafficking; may modulate vesicle budding and uncoating within the Golgi apparatus. The chain is ADP-ribosylation factor 3 (ARF3) from Bos taurus (Bovine).